Reading from the N-terminus, the 138-residue chain is Nucleoside diphosphate kinase (138 aa).

ATP-binding residues include K9, F57, R85, T91, R102, and N112. The active-site Pros-phosphohistidine intermediate is H115.

It belongs to the NDK family. As to quaternary structure, homotetramer. Mg(2+) is required as a cofactor.

Its subcellular location is the cytoplasm. The enzyme catalyses a 2'-deoxyribonucleoside 5'-diphosphate + ATP = a 2'-deoxyribonucleoside 5'-triphosphate + ADP. The catalysed reaction is a ribonucleoside 5'-diphosphate + ATP = a ribonucleoside 5'-triphosphate + ADP. Its function is as follows. Major role in the synthesis of nucleoside triphosphates other than ATP. The ATP gamma phosphate is transferred to the NDP beta phosphate via a ping-pong mechanism, using a phosphorylated active-site intermediate. The sequence is that of Nucleoside diphosphate kinase from Trichlorobacter lovleyi (strain ATCC BAA-1151 / DSM 17278 / SZ) (Geobacter lovleyi).